A 393-amino-acid polypeptide reads, in one-letter code: Cytochrome b (393 aa).

The next 4 membrane-spanning stretches (helical) occupy residues 32–52 (FGSLLGVCLIIQILTGVFLAM), 76–98 (WLIRYLHANTASFFFIFVYLHIG), 113–133 (LWSIGVIILVLMMAIAFLGYV), and 179–199 (FFSLHYLLPFVLAALAAMHLL). Residues His82 and His96 each contribute to the heme b site. Residues His183 and His197 each coordinate heme b. Residue His202 coordinates a ubiquinone. Helical transmembrane passes span 225–245 (FTFKDLVTIFVFLLALSLFVF), 289–309 (LIGVLAMFMSLLILLGMPILD), 321–341 (LMRFSFWTFVACFFILMFIGS), and 348–368 (YVEIGAAATAYYFAWFLVVVP).

The protein belongs to the cytochrome b family. In terms of assembly, fungal cytochrome b-c1 complex contains 10 subunits; 3 respiratory subunits, 2 core proteins and 5 low-molecular weight proteins. Cytochrome b-c1 complex is a homodimer. The cofactor is heme b.

It localises to the mitochondrion inner membrane. In terms of biological role, component of the ubiquinol-cytochrome c reductase complex (complex III or cytochrome b-c1 complex) that is part of the mitochondrial respiratory chain. The b-c1 complex mediates electron transfer from ubiquinol to cytochrome c. Contributes to the generation of a proton gradient across the mitochondrial membrane that is then used for ATP synthesis. The polypeptide is Cytochrome b (COB) (Mycosarcoma maydis (Corn smut fungus)).